A 987-amino-acid chain; its full sequence is Rho GTPase-activating protein 6 (987 aa).

Positions M1–T21 are enriched in polar residues. Disordered regions lie at residues M1 to T60, S76 to F117, and G144 to S170. S37 carries the post-translational modification Phosphoserine. Residues G44–R57 are compositionally biased toward gly residues. Residues S100–G115 show a composition bias toward polar residues. The span at G144–S159 shows a compositional bias: low complexity. At S265 the chain carries Phosphoserine. The segment at K324–A363 is disordered. Residues E328–N350 show a composition bias toward low complexity. The short motif at N344 to P354 is the SH3-binding element. S365 carries the post-translational modification Phosphoserine. One can recognise a Rho-GAP domain in the interval L403 to F604. The segment at D641–P676 is disordered. Polar residues predominate over residues T658 to P676. S669, S675, S682, S713, S758, S776, S781, S790, and S824 each carry phosphoserine. Residues G709–M731 are disordered. 2 disordered regions span residues T825–S847 and W863–Q953. Residues L939 to S948 show a composition bias toward low complexity. Phosphoserine is present on residues S941 and S944.

In terms of tissue distribution, expressed in retina and lung.

It localises to the cytoplasm. Its function is as follows. GTPase activator for the Rho-type GTPases by converting them to an inactive GDP-bound state. Could regulate the interactions of signaling molecules with the actin cytoskeleton. Promotes continuous elongation of cytoplasmic processes during cell motility and simultaneous retraction of the cell body changing the cell morphology. In Mus musculus (Mouse), this protein is Rho GTPase-activating protein 6 (Arhgap6).